A 428-amino-acid polypeptide reads, in one-letter code: Glutamate-1-semialdehyde 2,1-aminomutase (428 aa).

N6-(pyridoxal phosphate)lysine is present on K265.

It belongs to the class-III pyridoxal-phosphate-dependent aminotransferase family. HemL subfamily. Homodimer. Pyridoxal 5'-phosphate serves as cofactor.

Its subcellular location is the cytoplasm. The enzyme catalyses (S)-4-amino-5-oxopentanoate = 5-aminolevulinate. The protein operates within porphyrin-containing compound metabolism; protoporphyrin-IX biosynthesis; 5-aminolevulinate from L-glutamyl-tRNA(Glu): step 2/2. This is Glutamate-1-semialdehyde 2,1-aminomutase from Shewanella sediminis (strain HAW-EB3).